The sequence spans 422 residues: Serine--tRNA ligase (422 aa).

238 to 240 (TSE) is an L-serine binding site. Position 269-271 (269-271 (RKE)) interacts with ATP. L-serine is bound at residue Glu292. 356–359 (EISS) serves as a coordination point for ATP. Ser390 provides a ligand contact to L-serine.

This sequence belongs to the class-II aminoacyl-tRNA synthetase family. Type-1 seryl-tRNA synthetase subfamily. Homodimer. The tRNA molecule binds across the dimer.

Its subcellular location is the cytoplasm. It catalyses the reaction tRNA(Ser) + L-serine + ATP = L-seryl-tRNA(Ser) + AMP + diphosphate + H(+). It carries out the reaction tRNA(Sec) + L-serine + ATP = L-seryl-tRNA(Sec) + AMP + diphosphate + H(+). The protein operates within aminoacyl-tRNA biosynthesis; selenocysteinyl-tRNA(Sec) biosynthesis; L-seryl-tRNA(Sec) from L-serine and tRNA(Sec): step 1/1. In terms of biological role, catalyzes the attachment of serine to tRNA(Ser). Is also able to aminoacylate tRNA(Sec) with serine, to form the misacylated tRNA L-seryl-tRNA(Sec), which will be further converted into selenocysteinyl-tRNA(Sec). The chain is Serine--tRNA ligase from Helicobacter hepaticus (strain ATCC 51449 / 3B1).